The chain runs to 189 residues: Peptidyl-tRNA hydrolase (189 aa).

Tyr14 is a tRNA binding site. Residue His19 is the Proton acceptor of the active site. Residues Tyr64, Asn66, and Asn112 each contribute to the tRNA site.

It belongs to the PTH family. Monomer.

The protein localises to the cytoplasm. The catalysed reaction is an N-acyl-L-alpha-aminoacyl-tRNA + H2O = an N-acyl-L-amino acid + a tRNA + H(+). Functionally, hydrolyzes ribosome-free peptidyl-tRNAs (with 1 or more amino acids incorporated), which drop off the ribosome during protein synthesis, or as a result of ribosome stalling. Catalyzes the release of premature peptidyl moieties from peptidyl-tRNA molecules trapped in stalled 50S ribosomal subunits, and thus maintains levels of free tRNAs and 50S ribosomes. The sequence is that of Peptidyl-tRNA hydrolase from Brevibacillus brevis (strain 47 / JCM 6285 / NBRC 100599).